A 601-amino-acid polypeptide reads, in one-letter code: Elongation factor 4 (601 aa).

The tr-type G domain maps to 7-189 (ELIRNFSIIA…ALVTRLPPPK (183 aa)). Residues 19–24 (DHGKST) and 136–139 (NKID) each bind GTP.

The protein belongs to the TRAFAC class translation factor GTPase superfamily. Classic translation factor GTPase family. LepA subfamily.

Its subcellular location is the cell inner membrane. The enzyme catalyses GTP + H2O = GDP + phosphate + H(+). Its function is as follows. Required for accurate and efficient protein synthesis under certain stress conditions. May act as a fidelity factor of the translation reaction, by catalyzing a one-codon backward translocation of tRNAs on improperly translocated ribosomes. Back-translocation proceeds from a post-translocation (POST) complex to a pre-translocation (PRE) complex, thus giving elongation factor G a second chance to translocate the tRNAs correctly. Binds to ribosomes in a GTP-dependent manner. The chain is Elongation factor 4 from Acidiphilium cryptum (strain JF-5).